We begin with the raw amino-acid sequence, 180 residues long: Adipocyte-related X-chromosome expressed sequence 1 (180 aa).

Topologically, residues 1–11 (MNSLLSRANSL) are cytoplasmic. Residues 12-32 (FAFTLSVMAALTLGCILTTAF) form a helical; Signal-anchor for type II membrane protein membrane-spanning segment. At 33-180 (KDRSAPVRLH…PDSYEIATTF (148 aa)) the chain is on the lumenal side. Residue N141 is glycosylated (N-linked (GlcNAc...) asparagine).

The protein belongs to the SPCS3 family. As to expression, strongly expressed in epididymal white and brown adipose tissue with low levels in heart.

It localises to the endoplasmic reticulum membrane. Functionally, plays a role in adipogenesis. The sequence is that of Adipocyte-related X-chromosome expressed sequence 1 from Mus musculus (Mouse).